Reading from the N-terminus, the 414-residue chain is Eukaryotic initiation factor 4A-3 (414 aa).

A2 bears the N-acetylalanine mark. The Q motif signature appears at 41-69 (DSFDAMELQPDLLRGIYAYGFEKPSAIQQ). The region spanning 72 to 242 (IIPFCKGLDV…RKFMNKPVRI (171 aa)) is the Helicase ATP-binding domain. 85–92 (AQSGTGKT) is a binding site for ATP. S106 carries the phosphoserine modification. T147 carries the post-translational modification Phosphothreonine. A DEAD box motif is present at residues 190-193 (DEAD). The 162-residue stretch at 253-414 (GIKQFYVNVD…ELPSNVADLL (162 aa)) folds into the Helicase C-terminal domain.

The protein belongs to the DEAD box helicase family. eIF4A subfamily. As to quaternary structure, eIF4F is a multi-subunit complex, the composition of which varies with external and internal environmental conditions. It is composed of at least EIF4A, EIF4E and EIF4G.

The protein localises to the cytoplasm. The enzyme catalyses ATP + H2O = ADP + phosphate + H(+). ATP-dependent RNA helicase which is a subunit of the eIF4F complex involved in cap recognition and is required for mRNA binding to ribosome. In the current model of translation initiation, eIF4A unwinds RNA secondary structures in the 5'-UTR of mRNAs which is necessary to allow efficient binding of the small ribosomal subunit, and subsequent scanning for the initiator codon. The polypeptide is Eukaryotic initiation factor 4A-3 (TIF4A-3) (Arabidopsis thaliana (Mouse-ear cress)).